Here is a 382-residue protein sequence, read N- to C-terminus: Histidinol-phosphate aminotransferase (382 aa).

Lysine 215 is modified (N6-(pyridoxal phosphate)lysine). The segment at 360–382 (NSNNIDNQSKTHSQTSSIRKGTI) is disordered.

This sequence belongs to the class-II pyridoxal-phosphate-dependent aminotransferase family. Histidinol-phosphate aminotransferase subfamily. In terms of assembly, homodimer. Requires pyridoxal 5'-phosphate as cofactor.

The catalysed reaction is L-histidinol phosphate + 2-oxoglutarate = 3-(imidazol-4-yl)-2-oxopropyl phosphate + L-glutamate. It participates in amino-acid biosynthesis; L-histidine biosynthesis; L-histidine from 5-phospho-alpha-D-ribose 1-diphosphate: step 7/9. This chain is Histidinol-phosphate aminotransferase, found in Yersinia pseudotuberculosis serotype IB (strain PB1/+).